The primary structure comprises 150 residues: L-alanine exporter AlaE (150 aa).

4 helical membrane passes run 17–37, 48–68, 86–106, and 111–131; these read FAMVVFCFVTGMIIEIFVSGM, LSIPVNIAIAWPYGVFRDYVL, LVAYVLFQSPVYAAILFTVGA, and IITAVATNALVSCGMGVLYGY.

This sequence belongs to the AlaE exporter family.

It is found in the cell inner membrane. Exports L-alanine. The sequence is that of L-alanine exporter AlaE from Vibrio cholerae serotype O1 (strain ATCC 39315 / El Tor Inaba N16961).